The chain runs to 250 residues: Probable 2' cyclic ADP-D-ribose synthase TcpB (250 aa).

The interval 1–46 (MSKEKQAQSKAHKAQQAISSAKSLSTQKSKMSELERATRDGAAIGK) is disordered. A compositionally biased stretch (low complexity) spans 14–23 (AQQAISSAKS). The segment covering 30-39 (KMSELERATR) has biased composition (basic and acidic residues). Positions 117 to 250 (EEYDFFISHA…EIAKELHSLI (134 aa)) constitute a TIR domain. Glu192 is an active-site residue.

In terms of assembly, homodimer. Interacts with host TIRAP. Interacts with host TLR4, abolishes the interaction of host TIRAP with TLR4.

It is found in the secreted. Its subcellular location is the host cell membrane. It catalyses the reaction NAD(+) + H2O = ADP-D-ribose + nicotinamide + H(+). The catalysed reaction is NAD(+) = 2'cADPR + nicotinamide + H(+). Functionally, virulence factor that interferes with host Toll-like receptor 2 (TLR2) signaling, resulting in the reduction of dendritic cell maturation, inhibition of pro-inflammatory cytokine secretion and impaired NF-kappa-B activation in macrophages. Also acts on host TLR4. Binds host lipids. Has NAD(+) hydrolase (NADase) activity, catalyzes cleavage of NAD(+) into ADP-D-ribose (ADPR) and nicotinamide, also generates a cyclization variant of cyclic ADPR (cADPR), termed v-cADPR (probably 2'cADPR). In Brucella abortus (strain 2308), this protein is Probable 2' cyclic ADP-D-ribose synthase TcpB.